Here is a 294-residue protein sequence, read N- to C-terminus: Elongation factor Ts (294 aa).

The segment at threonine 82–valine 85 is involved in Mg(2+) ion dislocation from EF-Tu.

It belongs to the EF-Ts family.

It localises to the cytoplasm. Associates with the EF-Tu.GDP complex and induces the exchange of GDP to GTP. It remains bound to the aminoacyl-tRNA.EF-Tu.GTP complex up to the GTP hydrolysis stage on the ribosome. The polypeptide is Elongation factor Ts (Nitrosomonas eutropha (strain DSM 101675 / C91 / Nm57)).